We begin with the raw amino-acid sequence, 25 residues long: Chaperonin GroEL (25 aa).

This sequence belongs to the chaperonin (HSP60) family. Forms a cylinder of 14 subunits composed of two heptameric rings stacked back-to-back. Interacts with the co-chaperonin GroES.

Its subcellular location is the cytoplasm. It carries out the reaction ATP + H2O + a folded polypeptide = ADP + phosphate + an unfolded polypeptide.. Its function is as follows. Together with its co-chaperonin GroES, plays an essential role in assisting protein folding. The GroEL-GroES system forms a nano-cage that allows encapsulation of the non-native substrate proteins and provides a physical environment optimized to promote and accelerate protein folding. The chain is Chaperonin GroEL from Delftia acidovorans (Pseudomonas acidovorans).